The following is a 353-amino-acid chain: Melanin-concentrating hormone receptor 1 (353 aa).

The interval 1–28 (MDLEASLLPTGPNASNTSDGPDNLTSAG) is disordered. Over 1–45 (MDLEASLLPTGPNASNTSDGPDNLTSAGPPPRTGSISYVNIIMPS) the chain is Extracellular. The segment covering 12-26 (PNASNTSDGPDNLTS) has biased composition (polar residues). 3 N-linked (GlcNAc...) asparagine glycosylation sites follow: asparagine 13, asparagine 16, and asparagine 23. A helical transmembrane segment spans residues 46-66 (VFGTICLLGIIGNSMVIFAVV). Residues 67–79 (KKSKLHWFSNVPD) are Cytoplasmic-facing. The helical transmembrane segment at 80–100 (IFIINLSVVDLLFLLGMPFMI) threads the bilayer. Residues 101–116 (HQLMGNGVWHFGETMC) are Extracellular-facing. Cysteine 116 and cysteine 194 are disulfide-bonded. Residues 117–139 (TLITAMDANSQFTSTYILTAMAI) traverse the membrane as a helical segment. The Cytoplasmic portion of the chain corresponds to 140–161 (DRYLATVHPISSTRFRKPSVAT). The helical transmembrane segment at 162-182 (LVICLLWALSIISITPVWLYA) threads the bilayer. Over 183–204 (RLIPFPGGTVGCGIRLPNPDTD) the chain is Extracellular. The chain crosses the membrane as a helical span at residues 205 to 225 (LYWFTLYQFFLAFALPFVVIT). The Cytoplasmic segment spans residues 226-256 (AAYVRILQRMTSSVAPASQRSIRLRTKRVTR). Residues 257–277 (TAIAICLVFFVCWAPYYVLQL) form a helical membrane-spanning segment. Over 278 to 294 (TQLSISRPTLTFVYLYN) the chain is Extracellular. Residues 295–315 (AAISLGYANSCLNPFVYIVLC) traverse the membrane as a helical segment. Residues 316 to 353 (ETFRKRLVLSVKPAAQGQLRAVSNAQTAEEERTESKGT) are Cytoplasmic-facing.

This sequence belongs to the G-protein coupled receptor 1 family. Interacts with NCDN.

It localises to the cell membrane. Its function is as follows. Receptor for melanin-concentrating hormone, coupled to both G proteins that inhibit adenylyl cyclase and G proteins that activate phosphoinositide hydrolysis. The protein is Melanin-concentrating hormone receptor 1 of Sus scrofa (Pig).